The following is a 177-amino-acid chain: Ubiquinol-cytochrome c reductase iron-sulfur subunit (177 aa).

Residues 18-38 (IVLTASSVAAVGAACAFWPII) traverse the membrane as a helical segment. In terms of domain architecture, Rieske spans 88 to 175 (ARAVKMSELI…YIFISDTKIR (88 aa)). [2Fe-2S] cluster-binding residues include Cys120, His122, Cys139, and His142. An intrachain disulfide couples Cys125 to Cys141.

Belongs to the Rieske iron-sulfur protein family. As to quaternary structure, the main subunits of complex b-c1 are: cytochrome b, cytochrome c1 and the Rieske protein. [2Fe-2S] cluster is required as a cofactor.

It localises to the cell membrane. The catalysed reaction is a quinol + 2 Fe(III)-[cytochrome c](out) = a quinone + 2 Fe(II)-[cytochrome c](out) + 2 H(+)(out). Its function is as follows. Component of the ubiquinol-cytochrome c reductase complex (complex III or cytochrome b-c1 complex), which is a respiratory chain that generates an electrochemical potential coupled to ATP synthesis. The polypeptide is Ubiquinol-cytochrome c reductase iron-sulfur subunit (petA) (Rickettsia typhi (strain ATCC VR-144 / Wilmington)).